The primary structure comprises 869 residues: MSRFFRGDSSSDSSSDEEEDLYSDDEEVQEQPEEESSEDDSEEDDDDDDDSDSSSDDGAGKKTGANAFLKDDSDSDSESSGDEGVKVVKSAKNKRFEELEATAKAIENGEKINDWGSISAEFDKLNRQVAKLLQSGTIPKVYIKAIADLEDFMNETLAKQKVTPKKMNATNSRGLNAVKQKIKKASKEHQKDIDSFRADKDAYMESEDEEVVAPKQKKPRSSAAQDVAADDDDEGWGTVGKGGRTLQFTPESILKHLRTILESRGKKNTDRNEQIKIMEKLYEVAATPYQRIRVLLTIISTRFDMTTGTQTFMSQEQWKAAEKEFGTLLSVLETSREYVVVETAEPWEDDEKLPTVAEGGKFAIPGSVVSYVERLDDELTRSLQHIDPHTAEYIERLSDESDLYNNIVRTMLYQEEISKDASLNEPQRSLNRVVMRRLEHVYFKPSAVIKILDENCWKAVPAELNSTITPRGSVEDAKTLVNVLCNYLYINTEGEGLTKARAMLCQIYFEALHDNYYKARDMMLMSHLQETINSFDVHSQILFNRTLVQVGLCAFRAGLVYEAQTTLQEICGSGRQKELLAQGVMIQRYNQVTPDQERLEKQRQLPFHMHINLELLECVYLTCSMLLEIPLFAQTGSSPDIKKRVISKTYRRMLEYHERQIFTGPPENTRDHVMQASKALAQGEWKRATEFIHSIKIWELMSKPEEIKAMLSAQIQEEGLRTYLFTYAPYYDTLSVSRLSSMFDLSDRKVAAIVSKMISHEELAAALDQVSSSIIFRKGVELSRLQSLALSLSDKASGLIESNERTLETRTQGTANAFERQGGRGGRGGNRGGRGGGRGGRGGISNAPRQAGGTQFTGGALGAAVGSRA.

Disordered stretches follow at residues 1 to 92 (MSRF…KSAK) and 182 to 242 (IKKA…VGKG). Positions 14-55 (SSDEEEDLYSDDEEVQEQPEEESSEDDSEEDDDDDDDSDSSS) are enriched in acidic residues. Residues 185–203 (ASKEHQKDIDSFRADKDAY) show a composition bias toward basic and acidic residues. Residues 607–781 (FHMHINLELL…SSIIFRKGVE (175 aa)) form the PCI domain. The tract at residues 803–869 (NERTLETRTQ…ALGAAVGSRA (67 aa)) is disordered. Positions 823-843 (GRGGRGGNRGGRGGGRGGRGG) are enriched in gly residues.

This sequence belongs to the eIF-3 subunit C family. In terms of assembly, component of the eukaryotic translation initiation factor 3 (eIF-3) complex.

The protein resides in the cytoplasm. Its function is as follows. Component of the eukaryotic translation initiation factor 3 (eIF-3) complex, which is involved in protein synthesis of a specialized repertoire of mRNAs and, together with other initiation factors, stimulates binding of mRNA and methionyl-tRNAi to the 40S ribosome. The eIF-3 complex specifically targets and initiates translation of a subset of mRNAs involved in cell proliferation. The protein is Eukaryotic translation initiation factor 3 subunit C (nip1) of Botryotinia fuckeliana (strain B05.10) (Noble rot fungus).